The following is a 68-amino-acid chain: DNA-directed RNA polymerase subunit omega (68 aa).

It belongs to the RNA polymerase subunit omega family. The RNAP catalytic core consists of 2 alpha, 1 beta, 1 beta' and 1 omega subunit. When a sigma factor is associated with the core the holoenzyme is formed, which can initiate transcription.

The catalysed reaction is RNA(n) + a ribonucleoside 5'-triphosphate = RNA(n+1) + diphosphate. Functionally, promotes RNA polymerase assembly. Latches the N- and C-terminal regions of the beta' subunit thereby facilitating its interaction with the beta and alpha subunits. The chain is DNA-directed RNA polymerase subunit omega from Desulfitobacterium hafniense (strain DSM 10664 / DCB-2).